The chain runs to 210 residues: Cytochrome c4 (210 aa).

Positions 1-20 (MNKVLVSLLLTLGITGMAHA) are cleaved as a signal peptide. 8 residues coordinate heme c: Cys34, Cys37, His38, Met86, Cys139, Cys142, His143, and Met187.

In terms of processing, binds 2 heme c groups covalently per subunit.

It is found in the periplasm. In terms of biological role, diheme, high potential cytochrome c believed to be an intermediate electron donor to terminal oxidation systems. This is Cytochrome c4 (cc4) from Stutzerimonas stutzeri (Pseudomonas stutzeri).